A 641-amino-acid polypeptide reads, in one-letter code: Pre-mRNA-processing factor 39 (641 aa).

The disordered stretch occupies residues 1–50 (MEKSPEHCAEGSPSPATESAPSATEPPLPSTEPPLPSTEPPLPSTEPPLP). Low complexity predominate over residues 10-23 (EGSPSPATESAPSA). Over residues 24–50 (TEPPLPSTEPPLPSTEPPLPSTEPPLP) the composition is skewed to pro residues. HAT repeat units follow at residues 50 to 82 (PPLP…YVEQ), 84 to 116 (NHLF…LEKK), 118 to 150 (NNIL…FLKE), 158 to 193 (ETSL…WETE), 304 to 336 (NFEE…FELE), 338 to 370 (GSNE…YMEN), and 372 to 407 (SVEG…QQGN).

Belongs to the PRP39 family.

It localises to the nucleus. Functionally, involved in pre-mRNA splicing. The sequence is that of Pre-mRNA-processing factor 39 (prpf39) from Xenopus laevis (African clawed frog).